We begin with the raw amino-acid sequence, 231 residues long: Female protein (231 aa).

An N-terminal signal peptide occupies residues 1 to 19; that stretch reads MDKMLLLLGVSILLSEVFA. Residues 24–223 enclose the Pentraxin (PTX) domain; sequence TGKVFVFPRE…YAVIRPRCVA (200 aa). N-linked (GlcNAc...) asparagine glycosylation occurs at N51. The cysteines at positions 55 and 114 are disulfide-linked. Residues D77, N78, E155, Q156, D157, and Q167 each contribute to the Ca(2+) site.

The protein belongs to the pentraxin family. As to quaternary structure, homopentamer. Pentraxin (or pentaxin) have a discoid arrangement of 5 non-covalently bound subunits. It depends on Ca(2+) as a cofactor.

It is found in the secreted. In Nothocricetulus migratorius (Gray dwarf hamster), this protein is Female protein.